The sequence spans 176 residues: DELTA-stichotoxin-She4a (176 aa).

The segment at Glu2–Ala11 is plays an important role in the hemolytic activity. The tract at residues Gly10–Ser29 is N-terminal region. The phosphocholine site is built by Ser53, Val86, Ser104, Pro106, Tyr132, Tyr136, and Tyr137. Residues Ser104–Lys119 are trp-rich region, which is important for the binding to lipid membrane. The short motif at Arg142 to Asp144 is the Cell attachment site element.

In terms of assembly, octamer or nonamer in membranes. Monomer in the soluble state.

The protein resides in the secreted. Its subcellular location is the nematocyst. It localises to the target cell membrane. In terms of biological role, pore-forming protein that forms cations-selective hydrophilic pores of around 1 nm and causes cardiac stimulation and cytolysis. Pore formation is a multi-step process that involves specific recognition of membrane sphingomyelin (but neither cholesterol nor phosphatidylcholine) using aromatic rich region and adjacent phosphocholine (POC) binding site, firm binding to the membrane (mainly driven by hydrophobic interactions) accompanied by the transfer of the N-terminal region to the lipid-water interface and finally pore formation after oligomerization of monomers. Cytolytic effects include red blood cells hemolysis, platelet aggregation and lysis, cytotoxic and cytostatic effects on fibroblasts. Lethality in mammals has been ascribed to severe vasospasm of coronary vessels, cardiac arrhythmia, and inotropic effects. In Stichodactyla helianthus (Sun anemone), this protein is DELTA-stichotoxin-She4a.